The sequence spans 99 residues: Integration host factor subunit alpha (99 aa).

Residues 49 to 75 form a disordered region; the sequence is FGNFDLRDKNQRPGRNPKTGEDIPITA.

It belongs to the bacterial histone-like protein family. Heterodimer of an alpha and a beta chain.

Its function is as follows. This protein is one of the two subunits of integration host factor, a specific DNA-binding protein that functions in genetic recombination as well as in transcriptional and translational control. This is Integration host factor subunit alpha from Salmonella agona (strain SL483).